A 354-amino-acid chain; its full sequence is Ferrochelatase (354 aa).

Histidine 214 and glutamate 295 together coordinate Fe cation.

Belongs to the ferrochelatase family.

The protein resides in the cytoplasm. The catalysed reaction is heme b + 2 H(+) = protoporphyrin IX + Fe(2+). It functions in the pathway porphyrin-containing compound metabolism; protoheme biosynthesis; protoheme from protoporphyrin-IX: step 1/1. Its function is as follows. Catalyzes the ferrous insertion into protoporphyrin IX. The protein is Ferrochelatase of Burkholderia orbicola (strain MC0-3).